Here is a 1378-residue protein sequence, read N- to C-terminus: Macrophage-stimulating protein receptor (1378 aa).

The signal sequence occupies residues 1–23; it reads MGLPLPLLQSSLLLMLLLRLSAA. Residues 25–960 lie on the Extracellular side of the membrane; that stretch reads TNLNWQCPRI…RSSPGRASQR (936 aa). A Sema domain is found at 33–524; that stretch reads RIPYAASRDF…SGDQVFKVPI (492 aa). N91 carries an N-linked (GlcNAc...) asparagine glycan. 7 disulfides stabilise this stretch: C102–C105, C108–C163, C136–C144, C175–C178, C301–C368, C386–C409, and C387–C424. 3 N-linked (GlcNAc...) asparagine glycosylation sites follow: N391, N460, and N490. 4 disulfides stabilise this stretch: C529–C547, C535–C569, C538–C554, and C550–C560. 3 consecutive IPT/TIG domains span residues 571 to 673, 686 to 769, and 772 to 864; these read PEIS…FRVE, PVLT…FHYK, and PIVL…FRFL. N-linked (GlcNAc...) asparagine glycans are attached at residues N656, N722, N845, and N901. A helical membrane pass occupies residues 961–981; it reads ILLIALLVLILLVAVLAVALI. The Cytoplasmic segment spans residues 982 to 1378; sequence FNSRRRKKQL…RPLSEPPLPT (397 aa). Residues 1002-1026 are disordered; sequence SDINDTASGAPNHEESSESRDGTSV. The span at 1013 to 1022 shows a compositional bias: basic and acidic residues; the sequence is NHEESSESRD. The Protein kinase domain maps to 1059–1322; the sequence is IHTDQVIGKG…ALVLEVKQVV (264 aa). ATP contacts are provided by residues 1065–1073, K1091, and 1138–1141; these read IGKGHFGVV and LPYM. The active-site Proton acceptor is the D1185. Position 1189 (R1189) interacts with ATP. Phosphotyrosine; by autocatalysis occurs at positions 1215, 1216, 1330, and 1337. The disordered stretch occupies residues 1347-1378; the sequence is DGSVPPEQVQPSPQHCRSTSKPRPLSEPPLPT. A compositionally biased stretch (low complexity) spans 1349–1360; the sequence is SVPPEQVQPSPQ.

The protein belongs to the protein kinase superfamily. Tyr protein kinase family. Heterodimer of an alpha chain and a beta chain which are disulfide linked. Binds PLXNB1. Associates with and is negatively regulated by HYAL2. Interacts when phosphorylated with downstream effectors including PIK3R1, PCLG1, GRB2 and GAB1. Interacts with integrin beta1/ITGB1 in a ligand-independent fashion. Isoform sf-Stk forms covalent heterodimers with friend spleen focus-forming virus (FSFFV) gp55. Post-translationally, proteolytic processing yields the two subunits. Autophosphorylated in response to ligand binding on Tyr-1215 and Tyr-1216 in the kinase domain leading to further phosphorylation of Tyr-1330 and Tyr-1337 in the C-terminal multifunctional docking site. In terms of processing, ubiquitinated. Ubiquitination by CBL regulates the receptor stability and activity through proteasomal degradation. Post-translationally, O-mannosylation of IPT/TIG domains on Thr or Ser residues by TMEM260 is required for protein maturation. O-mannosylated residues are composed of single mannose glycans that are not elongated or modified. In terms of tissue distribution, expressed in liver, skin, lung, brain, testis and kidney.

The protein localises to the membrane. It catalyses the reaction L-tyrosyl-[protein] + ATP = O-phospho-L-tyrosyl-[protein] + ADP + H(+). Its activity is regulated as follows. In its inactive state, the C-terminal tail interacts with the catalytic domain and inhibits the kinase activity. Upon ligand binding, the C-terminal tail is displaced and becomes phosphorylated, thus increasing the kinase activity. Its function is as follows. Receptor tyrosine kinase that transduces signals from the extracellular matrix into the cytoplasm by binding to MST1 ligand. Regulates many physiological processes including cell survival, migration and differentiation. Ligand binding at the cell surface induces autophosphorylation of RON on its intracellular domain that provides docking sites for downstream signaling molecules. Following activation by ligand, interacts with the PI3-kinase subunit PIK3R1, PLCG1 or the adapter GAB1. Recruitment of these downstream effectors by RON leads to the activation of several signaling cascades including the RAS-ERK, PI3 kinase-AKT, or PLCgamma-PKC. RON signaling activates the wound healing response by promoting epithelial cell migration, proliferation as well as survival at the wound site. Also plays a role in the innate immune response by regulating the migration and phagocytic activity of macrophages. Alternatively, RON can also promote signals such as cell migration and proliferation in response to growth factors other than MST1 ligand. The chain is Macrophage-stimulating protein receptor (Mst1r) from Mus musculus (Mouse).